The chain runs to 373 residues: Anhydro-N-acetylmuramic acid kinase (373 aa).

12-19 (GTSLDGVD) serves as a coordination point for ATP.

Belongs to the anhydro-N-acetylmuramic acid kinase family.

The catalysed reaction is 1,6-anhydro-N-acetyl-beta-muramate + ATP + H2O = N-acetyl-D-muramate 6-phosphate + ADP + H(+). Its pathway is amino-sugar metabolism; 1,6-anhydro-N-acetylmuramate degradation. It participates in cell wall biogenesis; peptidoglycan recycling. In terms of biological role, catalyzes the specific phosphorylation of 1,6-anhydro-N-acetylmuramic acid (anhMurNAc) with the simultaneous cleavage of the 1,6-anhydro ring, generating MurNAc-6-P. Is required for the utilization of anhMurNAc either imported from the medium or derived from its own cell wall murein, and thus plays a role in cell wall recycling. The protein is Anhydro-N-acetylmuramic acid kinase of Salmonella gallinarum (strain 287/91 / NCTC 13346).